The sequence spans 898 residues: Protein translocase subunit SecA (898 aa).

ATP is bound by residues glutamine 87, 105–109, and aspartate 512; that span reads GEGKT. Positions 855-865 are enriched in polar residues; sequence MQYQNNEGTSS. The tract at residues 855 to 898 is disordered; the sequence is MQYQNNEGTSSLHEKSEHKIGRNESCPCGSGKKYKHCHGSKAKY. A compositionally biased stretch (basic and acidic residues) spans 866 to 876; that stretch reads LHEKSEHKIGR. Positions 880, 882, 891, and 892 each coordinate Zn(2+). A compositionally biased stretch (basic residues) spans 886–898; it reads KKYKHCHGSKAKY.

This sequence belongs to the SecA family. As to quaternary structure, monomer and homodimer. Part of the essential Sec protein translocation apparatus which comprises SecA, SecYEG and auxiliary proteins SecDF-YajC and YidC. Zn(2+) is required as a cofactor.

The protein resides in the cell inner membrane. Its subcellular location is the cytoplasm. It carries out the reaction ATP + H2O + cellular proteinSide 1 = ADP + phosphate + cellular proteinSide 2.. Part of the Sec protein translocase complex. Interacts with the SecYEG preprotein conducting channel. Has a central role in coupling the hydrolysis of ATP to the transfer of proteins into and across the cell membrane, serving both as a receptor for the preprotein-SecB complex and as an ATP-driven molecular motor driving the stepwise translocation of polypeptide chains across the membrane. The protein is Protein translocase subunit SecA of Histophilus somni (strain 2336) (Haemophilus somnus).